The chain runs to 243 residues: MQSNHDSDASQAGDRPARPALRPLTPVEGRVLGVLVEKQHTVPDTYPLSLNALASGCNQKTARAPVMNVSEADILEAIDGLKGLSLVFEGSSSRVPRFEHNMQRVLAVPSQSVALLAMLLLRGPQTAAELRLNTARLHGFADISSVEAFLDELASHAPPFVVRLPRAPGARENRWMHLLSGEVSAAADADDADRTTGGATAAPGELEQLRAEQQALTEKVAKLQSLVEHMAGQLGIPVDEFLD.

Residues 1–23 (MQSNHDSDASQAGDRPARPALRP) are disordered.

Belongs to the UPF0502 family.

In Cupriavidus necator (strain ATCC 17699 / DSM 428 / KCTC 22496 / NCIMB 10442 / H16 / Stanier 337) (Ralstonia eutropha), this protein is UPF0502 protein H16_B1091.